The following is a 318-amino-acid chain: MDMRTTEQQYNPYRVFTRQQWAELRNDTPMTLEPGEFSKLRSMHDRLDLKEVEDIYLPLSRLLSMYVDAAQRLYYAQRQFLGIRDRKMPYIIGVAGSVSVGKSTTARVLQALLARWSPRPKVDLITTDGFLYPNAVLERQGLMQKKGFPESYDLPRLLAFLSDIKAGRHTVRAPVYSHLTYDIVPNQWVEIDQPDILIVEGVNVLQTGPLPRDGKAVPVVSDFFDFSVYIDADEAVLRKWYVKRFLSLRDTAFHDPRSYFNRYALLSDEEAIATAIAIWERTNLANLEDNILPTRPRATLILKKGADHEVETVALRRL.

ATP is bound at residue 96-103; the sequence is GSVSVGKS.

This sequence belongs to the prokaryotic pantothenate kinase family.

It localises to the cytoplasm. The catalysed reaction is (R)-pantothenate + ATP = (R)-4'-phosphopantothenate + ADP + H(+). The protein operates within cofactor biosynthesis; coenzyme A biosynthesis; CoA from (R)-pantothenate: step 1/5. The protein is Pantothenate kinase of Bradyrhizobium sp. (strain BTAi1 / ATCC BAA-1182).